The chain runs to 526 residues: Outer capsid protein VP5 (526 aa).

The involved in membrane permeabilization stretch occupies residues 1-42; sequence MGKIIKSLSRFGKKVGNALTSNTAKKIYNTIGKAAERFAESE.

Belongs to the orbivirus VP5 family.

It localises to the virion. In terms of biological role, VP5 protein is one of the two proteins (with VP2) which constitute the virus particle outer capsid. Acts as a membrane permeabilization protein that mediates release of viral particles from endosomal compartments into the cytoplasm. Permeabilization activity is probably negatively regulated by VP2 and is triggered by endosomal degradation of VP2 and exposure to low pH. The polypeptide is Outer capsid protein VP5 (Segment-6) (Bluetongue virus 13 (isolate USA) (BTV 13)).